Consider the following 648-residue polypeptide: MATAVEPEDQDLWEEEGILMVKLEDDFTCRPESVLQRDDPVLETSHQNFRRFRYQEAASPREALIRLRELCHQWLRPERRTKEQILELLVLEQFLTVLPGELQSWVRGQRPESGEEAVTLVEGLQKQPRRPRRWVTVHVHGQEVLSEETVHLGVEPESPNELQDPVQSSTPEQSPEETTQSPDLGAPAEQRPHQEEELQTLQESEVPVPEDPDLPAERSSGDSEMVALLTALSQGLVTFKDVAVCFSQDQWSDLDPTQKEFYGEYVLEEDCGIVVSLSFPIPRPDEISQVREEEPWVPDIQEPQETQEPEILSFTYTGDRSKDEEECLEQEDLSLEDIHRPVLGEPEIHQTPDWEIVFEDNPGRLNERRFGTNISQVNSFVNLRETTPVHPLLGRHHDCSVCGKSFTCNSHLVRHLRTHTGEKPYKCMECGKSYTRSSHLARHQKVHKMNAPYKYPLNRKNLEETSPVTQAERTPSVEKPYRCDDCGKHFRWTSDLVRHQRTHTGEKPFFCTICGKSFSQKSVLTTHQRIHLGGKPYLCGECGEDFSEHRRYLAHRKTHAAEELYLCSECGRCFTHSAAFAKHLRGHASVRPCRCNECGKSFSRRDHLVRHQRTHTGEKPFTCPTCGKSFSRGYHLIRHQRTHSEKTS.

Residue lysine 22 forms a Glycyl lysine isopeptide (Lys-Gly) (interchain with G-Cter in SUMO2) linkage. Residues 46 to 127 enclose the SCAN box domain; it reads HQNFRRFRYQ…VTLVEGLQKQ (82 aa). Residues 146–221 form a disordered region; the sequence is SEETVHLGVE…PDLPAERSSG (76 aa). Over residues 165-182 the composition is skewed to polar residues; sequence PVQSSTPEQSPEETTQSP. A KRAB domain is found at 237 to 308; it reads VTFKDVAVCF…DIQEPQETQE (72 aa). 2 C2H2-type zinc fingers span residues 397 to 419 and 425 to 447; these read HDCSVCGKSFTCNSHLVRHLRTH and YKCMECGKSYTRSSHLARHQKVH. Residues lysine 454 and lysine 460 each participate in a glycyl lysine isopeptide (Lys-Gly) (interchain with G-Cter in SUMO2) cross-link. The residue at position 466 (serine 466) is a Phosphoserine. The C2H2-type 3 zinc finger occupies 481–503; that stretch reads YRCDDCGKHFRWTSDLVRHQRTH. Glycyl lysine isopeptide (Lys-Gly) (interchain with G-Cter in SUMO2) cross-links involve residues lysine 507 and lysine 521. 5 C2H2-type zinc fingers span residues 509-531, 537-559, 565-587, 593-615, and 621-643; these read FFCTICGKSFSQKSVLTTHQRIH, YLCGECGEDFSEHRRYLAHRKTH, YLCSECGRCFTHSAAFAKHLRGH, CRCNECGKSFSRRDHLVRHQRTH, and FTCPTCGKSFSRGYHLIRHQRTH.

As to quaternary structure, interacts with SDP1. Highly expressed in testis. Also expressed in breast carcinoma cell lines.

It is found in the nucleus. Its function is as follows. Transcriptional repressor that binds to elements found predominantly in genes that participate in lipid metabolism. Among its targets are structural components of lipoprotein particles (apolipoproteins AIV, CIII, and E), enzymes involved in lipid processing (lipoprotein lipase, lecithin cholesteryl ester transferase), transporters involved in lipid homeostasis (ABCA1, ABCG1), and several genes involved in processes related to energy metabolism and vascular disease. The protein is Zinc finger protein 202 (ZNF202) of Homo sapiens (Human).